The chain runs to 402 residues: D-galactonate dehydratase family member RspA (402 aa).

The substrate site is built by Asn37 and His122. The Proton donor/acceptor role is filled by Tyr159. Asp210 serves as a coordination point for Mg(2+). His212 serves as the catalytic Proton donor/acceptor. Mg(2+)-binding residues include Glu236 and Glu262. Glu262, Arg283, His312, Asp316, and Glu339 together coordinate substrate.

The protein belongs to the mandelate racemase/muconate lactonizing enzyme family. GalD subfamily. The cofactor is Mg(2+).

It catalyses the reaction D-mannonate = 2-dehydro-3-deoxy-D-gluconate + H2O. Functionally, has low D-mannonate dehydratase activity (in vitro), suggesting that this is not a physiological substrate and that it has no significant role in D-mannonate degradation in vivo. Has no detectable activity with a panel of 70 other acid sugars (in vitro). The sequence is that of D-galactonate dehydratase family member RspA (rspA) from Cellvibrio japonicus (strain Ueda107) (Pseudomonas fluorescens subsp. cellulosa).